Consider the following 774-residue polypeptide: Protein translocase subunit SecA (774 aa).

Residues glutamine 66, 84–88 (GEGKS), and aspartate 474 each bind ATP.

Belongs to the SecA family.

Its subcellular location is the plastid. It localises to the chloroplast stroma. It is found in the chloroplast thylakoid membrane. It catalyses the reaction ATP + H2O + cellular proteinSide 1 = ADP + phosphate + cellular proteinSide 2.. Functionally, has a central role in coupling the hydrolysis of ATP to the transfer of proteins across the thylakoid membrane. This chain is Protein translocase subunit SecA, found in Cyanidioschyzon merolae (strain NIES-3377 / 10D) (Unicellular red alga).